Reading from the N-terminus, the 117-residue chain is Small ribosomal subunit protein bS6 (117 aa).

Residues 97 to 117 (TEEPSAILTKKDDRRGRRERN) are disordered.

It belongs to the bacterial ribosomal protein bS6 family.

Its function is as follows. Binds together with bS18 to 16S ribosomal RNA. The sequence is that of Small ribosomal subunit protein bS6 from Maricaulis maris (strain MCS10) (Caulobacter maris).